The sequence spans 431 residues: Adenylosuccinate lyase (431 aa).

Residues 4 to 5 (RY), 67 to 69 (RHD), and 93 to 94 (TS) contribute to the N(6)-(1,2-dicarboxyethyl)-AMP site. Residue His141 is the Proton donor/acceptor of the active site. Gln212 contributes to the N(6)-(1,2-dicarboxyethyl)-AMP binding site. The active-site Proton donor/acceptor is Ser262. N(6)-(1,2-dicarboxyethyl)-AMP-binding positions include Ser263, 268-270 (KRN), Asn276, and 307-311 (SAERI).

Belongs to the lyase 1 family. Adenylosuccinate lyase subfamily. As to quaternary structure, homotetramer. Residues from neighboring subunits contribute catalytic and substrate-binding residues to each active site.

It catalyses the reaction N(6)-(1,2-dicarboxyethyl)-AMP = fumarate + AMP. It carries out the reaction (2S)-2-[5-amino-1-(5-phospho-beta-D-ribosyl)imidazole-4-carboxamido]succinate = 5-amino-1-(5-phospho-beta-D-ribosyl)imidazole-4-carboxamide + fumarate. It functions in the pathway purine metabolism; AMP biosynthesis via de novo pathway; AMP from IMP: step 2/2. It participates in purine metabolism; IMP biosynthesis via de novo pathway; 5-amino-1-(5-phospho-D-ribosyl)imidazole-4-carboxamide from 5-amino-1-(5-phospho-D-ribosyl)imidazole-4-carboxylate: step 2/2. Its function is as follows. Catalyzes two reactions in de novo purine nucleotide biosynthesis. Catalyzes the breakdown of 5-aminoimidazole- (N-succinylocarboxamide) ribotide (SAICAR or 2-[5-amino-1-(5-phospho-beta-D-ribosyl)imidazole-4-carboxamido]succinate) to 5-aminoimidazole-4-carboxamide ribotide (AICAR or 5-amino-1-(5-phospho-beta-D-ribosyl)imidazole-4-carboxamide) and fumarate, and of adenylosuccinate (ADS or N(6)-(1,2-dicarboxyethyl)-AMP) to adenosine monophosphate (AMP) and fumarate. Influences the affinity of glutamyl--tRNA ligase for its substrates and increases its thermostability. This chain is Adenylosuccinate lyase (purB), found in Bacillus subtilis (strain 168).